Here is a 112-residue protein sequence, read N- to C-terminus: UPF0102 protein C8J_0145 (112 aa).

Belongs to the UPF0102 family.

The polypeptide is UPF0102 protein C8J_0145 (Campylobacter jejuni subsp. jejuni serotype O:6 (strain 81116 / NCTC 11828)).